The following is a 97-amino-acid chain: Large ribosomal subunit protein eL30 (97 aa).

It belongs to the eukaryotic ribosomal protein eL30 family.

In Methanoregula boonei (strain DSM 21154 / JCM 14090 / 6A8), this protein is Large ribosomal subunit protein eL30.